The chain runs to 126 residues: Glycine cleavage system H protein (126 aa).

One can recognise a Lipoyl-binding domain in the interval 21–103; sequence TVTVGISNHA…YEGGWIARIK (83 aa). K62 is subject to N6-lipoyllysine.

Belongs to the GcvH family. In terms of assembly, the glycine cleavage system is composed of four proteins: P, T, L and H. (R)-lipoate serves as cofactor.

The glycine cleavage system catalyzes the degradation of glycine. The H protein shuttles the methylamine group of glycine from the P protein to the T protein. The protein is Glycine cleavage system H protein of Aliivibrio salmonicida (strain LFI1238) (Vibrio salmonicida (strain LFI1238)).